Reading from the N-terminus, the 131-residue chain is Histone H2B.2 (131 aa).

Positions 1–19 (MSSAAEKKPASKAPAEKKP) are enriched in basic and acidic residues. The tract at residues 1-37 (MSSAAEKKPASKAPAEKKPAAKKTSTSVDGKKRSKVR) is disordered. An N6-acetyllysine; alternate mark is found at Lys7 and Lys8. Residues Lys7 and Lys8 each participate in a glycyl lysine isopeptide (Lys-Gly) (interchain with G-Cter in SUMO); alternate cross-link. Ser11 is modified (phosphoserine). At Lys12 the chain carries N6-acetyllysine. N6-acetyllysine; alternate occurs at positions 17, 18, 22, and 23. Glycyl lysine isopeptide (Lys-Gly) (interchain with G-Cter in SUMO); alternate cross-links involve residues Lys17 and Lys18. An N6-butyryllysine; alternate modification is found at Lys22. Lys23 carries the N6-methyllysine; alternate modification. At Lys35 the chain carries N6-succinyllysine. At Lys38 the chain carries N6,N6-dimethyllysine. Position 47 is an N6-succinyllysine (Lys47). A Glycyl lysine isopeptide (Lys-Gly) (interchain with G-Cter in ubiquitin) cross-link involves residue Lys124.

Belongs to the histone H2B family. In terms of assembly, the nucleosome is a histone octamer containing two molecules each of H2A, H2B, H3 and H4 assembled in one H3-H4 heterotetramer and two H2A-H2B heterodimers. The octamer wraps approximately 147 bp of DNA. Interacts with NAP1. In terms of processing, monoubiquitinated by the RAD6/UBC2-BRE1 complex to form H2BK123ub1. H2BK123ub1 gives a specific tag for epigenetic transcriptional activation and is also prerequisite for H3K4me and H3K79me formation. H2BK123ub1 also modulates the formation of double-strand breaks during meiosis and is a prerequisite for DNA-damage checkpoint activation. Deubiquitination is performed by UBP8 in presence of SGF11. Post-translationally, phosphorylated by STE20 to form H2BS10ph during progression through meiotic prophase. May be correlated with chromosome condensation. H2BS10ph is also formed after H(2)O(2) treatment, and is a step leading to apoptosis. Acetylated by GCN5, a component of the SAGA complex, to form H2BK11ac and H2BK16ac. H2BK16ac can also be formed by ESA1, a component of the NuA4 histone acetyltransferase (HAT) complex. Acetylation of N-terminal lysines and particularly formation of H2BK11acK16ac has a positive effect on transcription. In terms of processing, sumoylation to form H2BK6su or H2BK7su, and probably also H2BK16su or H2BK17su, occurs preferentially near the telomeres and represses gene transcription.

It localises to the nucleus. The protein localises to the chromosome. Functionally, core component of nucleosome. Nucleosomes wrap and compact DNA into chromatin, limiting DNA accessibility to the cellular machineries which require DNA as a template. Histones thereby play a central role in transcription regulation, DNA repair, DNA replication and chromosomal stability. DNA accessibility is regulated via a complex set of post-translational modifications of histones, also called histone code, and nucleosome remodeling. The sequence is that of Histone H2B.2 (HTB2) from Saccharomyces cerevisiae (strain ATCC 204508 / S288c) (Baker's yeast).